The sequence spans 907 residues: CRM-domain containing factor CFM3B, chloroplastic (907 aa).

Residues 1 to 59 (MAINSSHHFCPMTTTTTTSAKFVDSLGSSFCKFHGTSSSISLRSYRFGFSFMKNVKRLS) constitute a chloroplast transit peptide. 2 disordered regions span residues 62–89 (GSSS…SKVV) and 101–123 (LGVI…GSSS). Residues 70–84 (RNENWNRTQKQNQFR) are compositionally biased toward polar residues. CRM domains are found at residues 220 to 316 (MTLS…DGSG) and 421 to 518 (STLG…EVGE). Residues 621-654 (SAKLVRKLERKLAFAEKKLLKAERALAKVEESLK) are a coiled coil. The 101-residue stretch at 663–763 (EGITEEERFM…KDYKRPTTLR (101 aa)) folds into the CRM 3 domain. Residues 824–907 (MAYSSDEETE…LQNEELDVQP (84 aa)) form a disordered region. 2 stretches are compositionally biased toward acidic residues: residues 828–857 (SDEE…DEEG) and 868–881 (TDVE…DTDF). The segment covering 882–897 (GDNSASSTTPETTFVE) has biased composition (polar residues).

In terms of assembly, interacts with RNA. Part of large ribonucleo-protein particles that contain CAF1 and/or CAF2, and RNC1. Interacts with RFC3 in plastids. In terms of tissue distribution, expressed at low levels in roots and shoots.

Its subcellular location is the plastid. It localises to the chloroplast. In terms of biological role, binds specific group II introns in chloroplasts and facilitates their splicing. Exhibits non-specific action during plastid rRNA biogenesis; RFC3 prevents unaccurate splicing to improve the accuracy of plastid rRNA processing. Acts on subgroup IIB introns. The substrates of the subgroup IIB also require the CRM domain proteins CAF1 or CAF2, with a simultaneous binding of CFM3B and CAF1 or CAF2. Required for seed development. The protein is CRM-domain containing factor CFM3B, chloroplastic of Arabidopsis thaliana (Mouse-ear cress).